Consider the following 512-residue polypeptide: GMP synthase [glutamine-hydrolyzing] (512 aa).

The 191-residue stretch at 7–197 (TIIVLDFGSQ…VFGVCGCSEG (191 aa)) folds into the Glutamine amidotransferase type-1 domain. The active-site Nucleophile is Cys84. Catalysis depends on residues His171 and Glu173. The 190-residue stretch at 198–387 (WNMENFIEVE…LGIPDEIVWR (190 aa)) folds into the GMPS ATP-PPase domain. ATP is bound at residue 225 to 231 (SGGVDSS).

Homodimer.

It carries out the reaction XMP + L-glutamine + ATP + H2O = GMP + L-glutamate + AMP + diphosphate + 2 H(+). Its pathway is purine metabolism; GMP biosynthesis; GMP from XMP (L-Gln route): step 1/1. Functionally, catalyzes the synthesis of GMP from XMP. In Bacillus cytotoxicus (strain DSM 22905 / CIP 110041 / 391-98 / NVH 391-98), this protein is GMP synthase [glutamine-hydrolyzing].